The primary structure comprises 229 residues: Octanoyltransferase (229 aa).

Residues 45–220 enclose the BPL/LPL catalytic domain; it reads ATAVDELWVV…ELARQFCFVL (176 aa). Residues 84-91, 151-153, and 164-166 contribute to the substrate site; these read RGGQVTYH, ALG, and GVA. Residue Cys-182 is the Acyl-thioester intermediate of the active site.

Belongs to the LipB family.

Its subcellular location is the cytoplasm. It catalyses the reaction octanoyl-[ACP] + L-lysyl-[protein] = N(6)-octanoyl-L-lysyl-[protein] + holo-[ACP] + H(+). It participates in protein modification; protein lipoylation via endogenous pathway; protein N(6)-(lipoyl)lysine from octanoyl-[acyl-carrier-protein]: step 1/2. Functionally, catalyzes the transfer of endogenously produced octanoic acid from octanoyl-acyl-carrier-protein onto the lipoyl domains of lipoate-dependent enzymes. Lipoyl-ACP can also act as a substrate although octanoyl-ACP is likely to be the physiological substrate. This Xylella fastidiosa (strain 9a5c) protein is Octanoyltransferase.